A 246-amino-acid polypeptide reads, in one-letter code: Bis(5'-nucleosyl)-tetraphosphatase PrpE [asymmetrical] (246 aa).

Belongs to the PrpE family. Requires Ni(2+) as cofactor.

The catalysed reaction is P(1),P(4)-bis(5'-guanosyl) tetraphosphate + H2O = GMP + GTP + 2 H(+). In terms of biological role, asymmetrically hydrolyzes Ap4p to yield AMP and ATP. The chain is Bis(5'-nucleosyl)-tetraphosphatase PrpE [asymmetrical] from Bacillus cereus (strain AH187).